The sequence spans 267 residues: 2-keto-3-deoxy-L-rhamnonate aldolase (267 aa).

The Proton acceptor role is filled by histidine 49. Glutamine 151 is a substrate binding site. A Mg(2+)-binding site is contributed by glutamate 153. Substrate is bound by residues alanine 178 and aspartate 179. Aspartate 179 serves as a coordination point for Mg(2+).

This sequence belongs to the HpcH/HpaI aldolase family. KDR aldolase subfamily. Homohexamer. Mg(2+) is required as a cofactor.

It catalyses the reaction 2-dehydro-3-deoxy-L-rhamnonate = (S)-lactaldehyde + pyruvate. Its function is as follows. Catalyzes the reversible retro-aldol cleavage of 2-keto-3-deoxy-L-rhamnonate (KDR) to pyruvate and lactaldehyde. In Salmonella paratyphi A (strain ATCC 9150 / SARB42), this protein is 2-keto-3-deoxy-L-rhamnonate aldolase.